The primary structure comprises 97 residues: YcgL domain-containing protein Tcr_0238 (97 aa).

One can recognise a YcgL domain in the interval 3–87 (LLVSAYKSAK…SEIEKMGDMP (85 aa)). Residues 78-97 (SEIEKMGDMPPPPEHLDNIF) are disordered.

In Hydrogenovibrio crunogenus (strain DSM 25203 / XCL-2) (Thiomicrospira crunogena), this protein is YcgL domain-containing protein Tcr_0238.